Reading from the N-terminus, the 405-residue chain is LanC-like protein GCL2 (405 aa).

3 residues coordinate Zn(2+): C278, C323, and H324.

Belongs to the LanC-like protein family.

In terms of biological role, may play a role in signaling. May be not involved in abscisic acid (ABA) signaling. This is LanC-like protein GCL2 (GCL2) from Arabidopsis thaliana (Mouse-ear cress).